The following is a 548-amino-acid chain: Probable malate:quinone oxidoreductase (548 aa).

This sequence belongs to the MQO family. It depends on FAD as a cofactor.

It carries out the reaction (S)-malate + a quinone = a quinol + oxaloacetate. It functions in the pathway carbohydrate metabolism; tricarboxylic acid cycle; oxaloacetate from (S)-malate (quinone route): step 1/1. This chain is Probable malate:quinone oxidoreductase, found in Escherichia coli O127:H6 (strain E2348/69 / EPEC).